Consider the following 985-residue polypeptide: MAASVAAAAGRLRRAIGRSCPWQRFSTEPHPPHGAAVRDAFLSFFRDRHGHRLVPSASVRPRGDPSLLFVNAGMNQFKPIFLGTVDPRSEMAGFRRVANSQKCVRAGGRHNDLEDVGRDLSHHTFFEMLGNWAFGGEYFKKEACSMAWELLTQVYGIPEDRLWVSYFSGDSKTGLDPDLETRDIWLSLGVPASRVLSFGLQENFWEMGDTGPCGPCTEIHYDLAGGMGPPQLVELWNLVFMQHYREADGSLHLLPQQHVDTGMGLERLVAVLQGKHSTYDTDLFSPLLDAIHQSCRVPPYSGRVGAADEGRIDTAYRVVADHIRTLSVCIADGVSPGMSGAPLVLRRILRRAVRYSTEVLQAPPGFLGNLVPVVVATLGAAYPELQKNSVKVLIWEIANLVSEDEAAFLASLQRGRRIIDRTVKRLGPSDLFPAEVAWSLSLSGNLGIPLDLVQLMLEEKGVKLDTAGLEQLAQKEAQHRAQQAEAAQEEGLCLDVHALEELHRQGIPTTDDSPKYNYSLRPNGDYEFGLCEAQVLQLYSETGTAVASVGEGQRCGLLLDRTNFYAEQGGQASDRGYLIRTGQQDVLFPVARAQVCGGFILHEAMAPECLQVGDRVQLYVDKAWRMGCMVKHTATHLLNWALRQTLGPTTEQRGSHLNPERLRFDVATQTPLTTEQLRTVESYVQEAVGQDKPVYMEEVPLAHTARIPGLRSLDEVYPDPVRVVSVGVPVAQALAPASQAALQTSVELCCGTHLLSTGAVGDLVIIGDRQLVKGITRLLAITGEQAQQAREVGQSLSQEVEVASERLSRGSRDLLEAHRLSKDIGRLIEFTESAVIPQWQRQEQQTTLKMLQRRANTAIRKLEKSQATEKSQELLKRHSEGPLIVDTVSAQSLSVLVKVVRQLCKQAPSMSVLLLSPQPTGSVLCACQVAQGATPTFTAEAWALAVCSHMGGKAWGSPVIAQGTGHTADLEAALRTARAYALNQL.

The transit peptide at 1 to 23 (MAASVAAAAGRLRRAIGRSCPWQ) directs the protein to the mitochondrion. Residues R105, H123, W205, and 235–237 (LWN) contribute to the ATP site. Residues N237 and D260 each contribute to the L-alanine site. G264 lines the ATP pocket. 4 residues coordinate Zn(2+): H632, H636, C749, and H753.

It belongs to the class-II aminoacyl-tRNA synthetase family. In terms of assembly, monomer. Requires Zn(2+) as cofactor.

It is found in the mitochondrion. The catalysed reaction is tRNA(Ala) + L-alanine + ATP = L-alanyl-tRNA(Ala) + AMP + diphosphate. It carries out the reaction (S)-lactate + ATP + H(+) = (S)-lactoyl-AMP + diphosphate. It catalyses the reaction (S)-lactoyl-AMP + L-lysyl-[protein] = N(6)-[(S)-lactoyl]-L-lysyl-[protein] + AMP + 2 H(+). Functionally, catalyzes the attachment of alanine to tRNA(Ala) in a two-step reaction: alanine is first activated by ATP to form Ala-AMP and then transferred to the acceptor end of tRNA(Ala). Also edits incorrectly charged tRNA(Ala) via its editing domain. In presence of high levels of lactate, also acts as a protein lactyltransferase that mediates lactylation of lysine residues in target proteins, such as CGAS. Acts as an inhibitor of cGAS/STING signaling by catalyzing lactylation of CGAS, preventing the formation of liquid-like droplets in which CGAS is activated. This chain is Alanine--tRNA ligase, mitochondrial (Aars2), found in Rattus norvegicus (Rat).